A 484-amino-acid chain; its full sequence is ATP synthase subunit beta, chloroplastic (484 aa).

Residue 163–170 (GGAGVGKT) participates in ATP binding.

The protein belongs to the ATPase alpha/beta chains family. F-type ATPases have 2 components, CF(1) - the catalytic core - and CF(0) - the membrane proton channel. CF(1) has five subunits: alpha(3), beta(3), gamma(1), delta(1), epsilon(1). CF(0) has four main subunits: a(1), b(1), b'(1) and c(9-12).

It localises to the plastid. It is found in the chloroplast thylakoid membrane. The enzyme catalyses ATP + H2O + 4 H(+)(in) = ADP + phosphate + 5 H(+)(out). In terms of biological role, produces ATP from ADP in the presence of a proton gradient across the membrane. The catalytic sites are hosted primarily by the beta subunits. The sequence is that of ATP synthase subunit beta, chloroplastic from Stigeoclonium helveticum (Green alga).